We begin with the raw amino-acid sequence, 282 residues long: E3 ubiquitin-protein ligase SIAH1B (282 aa).

Polar residues predominate over residues 1–17 (MSRQAATALSTGTSKCP). The interval 1-23 (MSRQAATALSTGTSKCPPSQRVP) is disordered. Serine 19 carries the phosphoserine; by ATM and ATR modification. The segment at 41–76 (CPVCFDYVLPPILQCQSGHLVCSNCRPKLTCCPTCR) adopts an RING-type zinc-finger fold. The tract at residues 90–282 (VANSVLFPCK…LGINVTISMC (193 aa)) is SBD. An SIAH-type zinc finger spans residues 93 to 153 (SVLFPCKYSA…VMPHLMHQHK (61 aa)). Zn(2+) is bound by residues cysteine 98, cysteine 105, histidine 117, cysteine 121, cysteine 128, cysteine 135, histidine 147, and histidine 152.

Belongs to the SINA (Seven in absentia) family. As to quaternary structure, homodimer. Post-translationally, phosphorylated on Ser-19 by ATM and ATR. As to expression, widely expressed at low level in embryos and adults. Due to the high similarity between SIAH1A and SIAH1B, it is difficult to distinguish its own tissue specificity. Overexpressed in endothelial cells of adult lung.

The protein resides in the cytoplasm. It is found in the nucleus. It catalyses the reaction S-ubiquitinyl-[E2 ubiquitin-conjugating enzyme]-L-cysteine + [acceptor protein]-L-lysine = [E2 ubiquitin-conjugating enzyme]-L-cysteine + N(6)-ubiquitinyl-[acceptor protein]-L-lysine.. It functions in the pathway protein modification; protein ubiquitination. In terms of biological role, E3 ubiquitin-protein ligase that mediates ubiquitination and subsequent proteasomal degradation of target proteins. E3 ubiquitin ligases accept ubiquitin from an E2 ubiquitin-conjugating enzyme in the form of a thioester and then directly transfers the ubiquitin to targeted substrates. Mediates E3 ubiquitin ligase activity either through direct binding to substrates or by functioning as the essential RING domain subunit of larger E3 complexes. The polypeptide is E3 ubiquitin-protein ligase SIAH1B (Siah1b) (Mus musculus (Mouse)).